Here is a 238-residue protein sequence, read N- to C-terminus: MIYAGILAGGIGSRMGNVPLPKQFLDIDNKPILIHTIEKFILVSEFNEIIIATPAQWISHTQDILKKYNITDQRVKVVAGGTDRNETIMNIIDHIRNTQGINDDDVIVTHDAVRPFLTQRIIKENIEVAAKYGAVDTVIEAIDTIVMSKDKQNIHSIPVRNEMYQGQTPQSFNIKLLQDSYRALSSAQKEILSDACKIIVESGHAVKLVRGELYNIKVTTPYDLKVANAIIQGDIADD.

CTP-binding positions include 7–10 (LAGG) and 81–87 (GTDRNET).

It belongs to the IspD/TarI cytidylyltransferase family. TarI subfamily.

The catalysed reaction is D-ribitol 5-phosphate + CTP + H(+) = CDP-L-ribitol + diphosphate. Its pathway is cell wall biogenesis; poly(ribitol phosphate) teichoic acid biosynthesis. Functionally, catalyzes the transfer of the cytidylyl group of CTP to D-ribitol 5-phosphate. The chain is Ribitol-5-phosphate cytidylyltransferase 2 from Staphylococcus aureus (strain MRSA252).